The sequence spans 417 residues: Probable sugar-binding periplasmic protein (417 aa).

An N-terminal signal peptide occupies residues methionine 1–alanine 21.

Belongs to the bacterial solute-binding protein 1 family.

The protein resides in the periplasm. Functionally, part of a binding-protein-dependent transport system for a sugar. This chain is Probable sugar-binding periplasmic protein, found in Mesorhizobium japonicum (strain LMG 29417 / CECT 9101 / MAFF 303099) (Mesorhizobium loti (strain MAFF 303099)).